Consider the following 230-residue polypeptide: 2-C-methyl-D-erythritol 4-phosphate cytidylyltransferase (230 aa).

The protein belongs to the IspD/TarI cytidylyltransferase family. IspD subfamily.

The enzyme catalyses 2-C-methyl-D-erythritol 4-phosphate + CTP + H(+) = 4-CDP-2-C-methyl-D-erythritol + diphosphate. The protein operates within isoprenoid biosynthesis; isopentenyl diphosphate biosynthesis via DXP pathway; isopentenyl diphosphate from 1-deoxy-D-xylulose 5-phosphate: step 2/6. Catalyzes the formation of 4-diphosphocytidyl-2-C-methyl-D-erythritol from CTP and 2-C-methyl-D-erythritol 4-phosphate (MEP). This is 2-C-methyl-D-erythritol 4-phosphate cytidylyltransferase from Shewanella halifaxensis (strain HAW-EB4).